The sequence spans 37 residues: Cytochrome b6-f complex subunit 5 (37 aa).

The chain crosses the membrane as a helical span at residues 5–25; the sequence is LLSGIVLGLVPVTIAGLFVTA.

The protein belongs to the PetG family. As to quaternary structure, the 4 large subunits of the cytochrome b6-f complex are cytochrome b6, subunit IV (17 kDa polypeptide, PetD), cytochrome f and the Rieske protein, while the 4 small subunits are PetG, PetL, PetM and PetN. The complex functions as a dimer.

It localises to the plastid. It is found in the chloroplast thylakoid membrane. Component of the cytochrome b6-f complex, which mediates electron transfer between photosystem II (PSII) and photosystem I (PSI), cyclic electron flow around PSI, and state transitions. PetG is required for either the stability or assembly of the cytochrome b6-f complex. The chain is Cytochrome b6-f complex subunit 5 from Chlamydomonas moewusii (Chlamydomonas eugametos).